The chain runs to 59 residues: Ribosome biogenesis protein Nop10 (59 aa).

It belongs to the NOP10 family.

Functionally, involved in ribosome biogenesis; more specifically in 18S rRNA pseudouridylation and in cleavage of pre-rRNA. This chain is Ribosome biogenesis protein Nop10, found in Thermococcus sibiricus (strain DSM 12597 / MM 739).